We begin with the raw amino-acid sequence, 226 residues long: Agamous-like MADS-box protein AP3 (226 aa).

Positions 1–61 constitute an MADS-box domain; that stretch reads MARGKIEIKR…GKLHEYISPS (61 aa). A K-box domain is found at 84–174; that stretch reads YERMQENLKK…LHEFDARDRD (91 aa).

In terms of tissue distribution, expressed during flower development in stamens and petals.

Its subcellular location is the nucleus. Its function is as follows. Probable transcription factor involved in flower development. This is Agamous-like MADS-box protein AP3 from Vitis vinifera (Grape).